The chain runs to 509 residues: tRNA (guanine(37)-N(1))-methyltransferase (509 aa).

A mitochondrion-targeting transit peptide spans 1–57 (MVLWILWRPFGFSRRLLKLERHSITESKSLIPLAWTSLTQTLSESPGIFLLGQRKRF). S-adenosyl-L-methionine contacts are provided by residues His289, 327-328 (DL), 355-356 (DG), and Asn387. Residues 478 to 509 (TKNPENHEDPPLKRQRTAEAFSDEKTQIASNT) form a disordered region.

The protein belongs to the class I-like SAM-binding methyltransferase superfamily. TRM5/TYW2 family. As to quaternary structure, monomer.

Its subcellular location is the mitochondrion matrix. It localises to the nucleus. The protein localises to the cytoplasm. It catalyses the reaction guanosine(37) in tRNA + S-adenosyl-L-methionine = N(1)-methylguanosine(37) in tRNA + S-adenosyl-L-homocysteine + H(+). Its function is as follows. Involved in mitochondrial tRNA methylation. Specifically methylates the N1 position of guanosine-37 in various tRNAs. Methylation is not dependent on the nature of the nucleoside 5' of the target nucleoside. This is the first step in the biosynthesis of wybutosine (yW), a modified base adjacent to the anticodon of tRNAs and required for accurate decoding. The protein is tRNA (guanine(37)-N(1))-methyltransferase of Macaca mulatta (Rhesus macaque).